The primary structure comprises 200 residues: Urease accessory protein UreE (200 aa).

A disordered region spans residues H171–H200.

It belongs to the UreE family.

It localises to the cytoplasm. In terms of biological role, involved in urease metallocenter assembly. Binds nickel. Probably functions as a nickel donor during metallocenter assembly. The polypeptide is Urease accessory protein UreE (Burkholderia vietnamiensis (strain G4 / LMG 22486) (Burkholderia cepacia (strain R1808))).